The chain runs to 379 residues: Cytochrome b (379 aa).

Transmembrane regions (helical) follow at residues 34 to 54 (FGSL…LLAM), 78 to 99 (WLIR…YLHI), 114 to 134 (WNTG…GYVL), and 179 to 199 (FFAL…IHLT). H84 and H98 together coordinate heme b. Residues H183 and H197 each contribute to the heme b site. H202 serves as a coordination point for a ubiquinone. 4 consecutive transmembrane segments (helical) span residues 227–247 (LKDA…AFFS), 289–309 (LGGV…PFLH), 321–341 (LSQI…WIGS), and 348–368 (FIII…VLFP).

Belongs to the cytochrome b family. As to quaternary structure, the cytochrome bc1 complex contains 11 subunits: 3 respiratory subunits (MT-CYB, CYC1 and UQCRFS1), 2 core proteins (UQCRC1 and UQCRC2) and 6 low-molecular weight proteins (UQCRH/QCR6, UQCRB/QCR7, UQCRQ/QCR8, UQCR10/QCR9, UQCR11/QCR10 and a cleavage product of UQCRFS1). This cytochrome bc1 complex then forms a dimer. Requires heme b as cofactor.

The protein resides in the mitochondrion inner membrane. Component of the ubiquinol-cytochrome c reductase complex (complex III or cytochrome b-c1 complex) that is part of the mitochondrial respiratory chain. The b-c1 complex mediates electron transfer from ubiquinol to cytochrome c. Contributes to the generation of a proton gradient across the mitochondrial membrane that is then used for ATP synthesis. This Rhea americana (Greater rhea) protein is Cytochrome b (MT-CYB).